A 204-amino-acid chain; its full sequence is Histone chaperone ASF1A (204 aa).

Residues 1-156 (MAKVQVNNVV…TRFHINWEDN (156 aa)) are interaction with histone H3, CHAF1B, and HIRA. A Required for interaction with HIRA motif is present at residues 31–37 (IEDLSED). The interval 155–204 (DNTEKLEDAESSNPNLQSLLSTDALPSASKGWSTSENSLNVMLESHMDCM) is required for interaction with HIRA. Ser192 is modified (phosphoserine).

Belongs to the ASF1 family. Interacts with histone H3 (via C-terminus), including histone H3.1, H3.2 and H3.3, and histone H4; the interaction with H3 is direct. Probably interacts with the heterodimeric form of H3-H4 taking the place of the second dimer. Interacts with the CHAF1A, CHAF1B and RBBP4 subunits of the CAF-1 complex. Interacts with CABIN1, HAT1, HIRA, NASP, TAF1 and UBN1. Found in a soluble complex with NASP and histones H3 and H4; the interaction with NASP is probably indirect and mediated by H3-H4. Interacts with CDAN1. Found in a cytosolic complex with IPO4 and histones H3 and H4. Interacts with CREBBP. Phosphorylated by TLK1 and TLK2. Highly phosphorylated in S-phase and at lower levels in M-phase. TLK2-mediated phosphorylation at Ser-192 prevents proteasome-dependent degradation. Phosphorylation at Ser-192 by PRKDC in response to DNA damage promotes the histone chaperone activity and ability to replace histones at double-strand breaks (DSBs) at stalled or collapsed replication forks, leading to RAD51 recruitment.

The protein localises to the nucleus. It is found in the chromosome. Its function is as follows. Histone chaperone that facilitates histone deposition and histone exchange and removal during nucleosome assembly and disassembly. Cooperates with chromatin assembly factor 1 (CAF-1) to promote replication-dependent chromatin assembly and with HIRA to promote replication-independent chromatin assembly. Promotes homologous recombination-mediated repair of double-strand breaks (DSBs) at stalled or collapsed replication forks: acts by mediating histone replacement at DSBs, leading to recruitment of the MMS22L-TONSL complex and subsequent loading of RAD51. Also involved in the nuclear import of the histone H3-H4 dimer together with importin-4 (IPO4): specifically recognizes and binds newly synthesized histones with the monomethylation of H3 'Lys-9' and acetylation at 'Lys-14' (H3K9me1K14ac) marks, and diacetylation at 'Lys-5' and 'Lys-12' of H4 (H4K5K12ac) marks in the cytosol. Required for the formation of senescence-associated heterochromatin foci (SAHF) and efficient senescence-associated cell cycle exit. This is Histone chaperone ASF1A from Mus musculus (Mouse).